We begin with the raw amino-acid sequence, 340 residues long: Probable tRNA pseudouridine synthase B (340 aa).

The active-site Nucleophile is the D82. The PUA domain maps to 250–325 (LPKVWIKDSA…IAVDVEKVFM (76 aa)).

Belongs to the pseudouridine synthase TruB family. Type 2 subfamily.

The catalysed reaction is uridine(55) in tRNA = pseudouridine(55) in tRNA. Its function is as follows. Could be responsible for synthesis of pseudouridine from uracil-55 in the psi GC loop of transfer RNAs. The sequence is that of Probable tRNA pseudouridine synthase B from Pyrococcus furiosus (strain ATCC 43587 / DSM 3638 / JCM 8422 / Vc1).